Consider the following 930-residue polypeptide: Isoleucine--tRNA ligase (930 aa).

The short motif at 57 to 67 is the 'HIGH' region element; it reads PYANGHLHIGH. Residue Glu573 participates in L-isoleucyl-5'-AMP binding. The 'KMSKS' region motif lies at 614–618; sequence KMSKS. Lys617 serves as a coordination point for ATP. Zn(2+) is bound by residues Cys902, Cys905, Cys918, and Cys921.

It belongs to the class-I aminoacyl-tRNA synthetase family. IleS type 1 subfamily. Monomer. The cofactor is Zn(2+).

It localises to the cytoplasm. The enzyme catalyses tRNA(Ile) + L-isoleucine + ATP = L-isoleucyl-tRNA(Ile) + AMP + diphosphate. Functionally, catalyzes the attachment of isoleucine to tRNA(Ile). As IleRS can inadvertently accommodate and process structurally similar amino acids such as valine, to avoid such errors it has two additional distinct tRNA(Ile)-dependent editing activities. One activity is designated as 'pretransfer' editing and involves the hydrolysis of activated Val-AMP. The other activity is designated 'posttransfer' editing and involves deacylation of mischarged Val-tRNA(Ile). The chain is Isoleucine--tRNA ligase from Helicobacter hepaticus (strain ATCC 51449 / 3B1).